Reading from the N-terminus, the 187-residue chain is Elongation factor P (187 aa).

Belongs to the elongation factor P family.

The protein resides in the cytoplasm. The protein operates within protein biosynthesis; polypeptide chain elongation. Involved in peptide bond synthesis. Stimulates efficient translation and peptide-bond synthesis on native or reconstituted 70S ribosomes in vitro. Probably functions indirectly by altering the affinity of the ribosome for aminoacyl-tRNA, thus increasing their reactivity as acceptors for peptidyl transferase. This Flavobacterium psychrophilum (strain ATCC 49511 / DSM 21280 / CIP 103535 / JIP02/86) protein is Elongation factor P.